The sequence spans 253 residues: MLCPAWLLAVAVVGVVRGVKGQCWENPRCHDLSSENNLLECIQLCRSDLTTKSPIFPVKVHLQPPSPSDSDSPPLYLPLSLLSPSSPLYPTEQQNSVSPQAKRSYSMEHFRWGKPVGRKRRPVKVYTNGVEEESSEAFPSEMRRELGTDDAVYPSLEAGTAEGGEAEGMEGVFSLQEKKDGSYKMNHFRWSGPPASKRYGGFMKSWDERSQKPLLTLFKNVIIKDGQQKREQWGREEGEEKRALGERKYHFQG.

A signal peptide spans 1-21; the sequence is MLCPAWLLAVAVVGVVRGVKG. Gln22 is subject to Pyrrolidone carboxylic acid. 2 cysteine pairs are disulfide-bonded: Cys23–Cys45 and Cys29–Cys41. Ser104 carries the post-translational modification N-acetylserine; in Corticotropin. The residue at position 116 (Val116) is a Valine amide. The segment at 228–253 is disordered; sequence QKREQWGREEGEEKRALGERKYHFQG. At Gln252 the chain carries Glutamine amide; partial.

Belongs to the POMC family. Post-translationally, specific enzymatic cleavages at paired basic residues yield the different active peptides. Acetylation of beta-endorphin occurs in a tissue-specific manner. As to expression, C-terminal peptide 1 and C-terminal peptide 2 are detected in the anterior part of the nucleus lateralis tuberis of hypothalamus, in dorsal hypothalamus, thalamus, telencephalon, optic tectum and medulla oblongata (at protein level). Expressed in pituitary and hypothalamus of adult diploid animals, and hypothalamus of triploid and ovulated female trout.

The protein localises to the secreted. In terms of biological role, stimulates the adrenal glands to release cortisol. Functionally, melanocyte-stimulating hormone alpha: Anorexigenic peptide. Increases the pigmentation of skin by increasing melanin production in melanocytes. Its function is as follows. Melanocyte-stimulating hormone beta: Increases the pigmentation of skin by increasing melanin production in melanocytes. Beta-endorphin: Endogenous orexigenic opiate. In terms of biological role, endogenous opiate. The chain is Pro-opiomelanocortin A (pomca) from Oncorhynchus mykiss (Rainbow trout).